Here is a 1248-residue protein sequence, read N- to C-terminus: Apoptotic protease-activating factor 1 (1248 aa).

The region spanning 1 to 90 is the CARD domain; sequence MDAKARNCLL…KDLAALLHDG (90 aa). The NB-ARC domain maps to 104–415; it reads SGITSYVRTV…METEEVEDIL (312 aa). Residues 154-161 and Arg265 each bind ATP; that span reads GMAGCGKS. The WD 1-1 repeat unit spans residues 613–652; sequence PHTDAVYHACFSEDGQRIASCGADKTLQVFKAETGEKLLE. One copy of the WD 1-2 repeat lies at 655–694; that stretch reads AHEDEVLCCAFSTDDRFIATCSVDKKVKIWNSMTGELVHT. Residues 697–738 form a WD 1-3 repeat; the sequence is EHSEQVNCCHFTNSSHHLLLATGSSDCFLKLWDLNQKECRNT. The WD 1-4 repeat unit spans residues 741–780; sequence GHTNSVNHCRFSPDDKLLASCSADGTLKLWDATSANERKS. Residues 796 to 836 form a WD 1-5 repeat; the sequence is DMEVIVKCCSWSADGARIMVAAKNKIFLFDIHTSGLLGEIH. Residues 838 to 877 form a WD 1-6 repeat; sequence GHHSTIQYCDFSPQNHLAVVALSQYCVELWNTDSRSKVAD. One copy of the WD 1-7 repeat lies at 880–910; sequence GHLSWVHGVMFSPDGSSFLTSSDDQTIRLWE. Residues 910 to 921 form an interpropeller linker region; sequence ETKKVCKNSAVM. Residues 922 to 958 form a WD 2-1 repeat; that stretch reads LKQEVDVVFQENEVMVLAVDHIRRLQLINGRTGQIDY. The stretch at 959 to 998 is one WD 2-2 repeat; that stretch reads LTEAQVSCCCLSPHLQYIAFGDENGAIEILELVNNRIFQS. The stretch at 1001–1040 is one WD 2-3 repeat; sequence QHKKTVWHIQFTADEKTLISSSDDAEIQVWNWQLDKCIFL. The WD 2-4 repeat unit spans residues 1042–1080; the sequence is GHQETVKDFRLLKNSRLLSWSFDGTVKVWNIITGNKEKD. Residues 1083 to 1122 form a WD 2-5 repeat; the sequence is CHQGTVLSCDISHDATKFSSTSADKTAKIWSFDLLLPLHE. Residues 1125–1164 form a WD 2-6 repeat; the sequence is GHNGCVRCSAFSVDSTLLATGDDNGEIRIWNVSNGELLHL. Residues 1175–1212 form a WD 2-7 repeat; sequence THGGWVTDLCFSPDGKMLISAGGYIKWWNVVTGESSQT. Residues 1213–1248 form a WD 2-8 repeat; sequence FYTNGTNLKKIHVSPDFKTYVTVDNLGILYILQTLE.

In terms of assembly, monomer. Oligomerizes to a heptameric ring, known as the apoptosome, upon binding of cytochrome c and dATP. Oligomeric Apaf-1 and pro-caspase-9 bind to each other via their respective NH2-terminal CARD domains and consecutively mature caspase-9 is released from the complex. Pro-caspase-3 is recruited into the Apaf-1-pro-caspase-9 complex via interaction with pro-caspase-9. Interacts with APIP. Interacts (via CARD and NACHT domains) with NAIP/BIRC1 (via NACHT domain). Interacts with CIAO2A. In terms of tissue distribution, ubiquitous. Highest levels of expression in adult spleen and peripheral blood leukocytes, and in fetal brain, kidney and lung. Isoform 1 is expressed in heart, kidney and liver.

Its subcellular location is the cytoplasm. In terms of biological role, oligomeric Apaf-1 mediates the cytochrome c-dependent autocatalytic activation of pro-caspase-9 (Apaf-3), leading to the activation of caspase-3 and apoptosis. This activation requires ATP. Isoform 6 is less effective in inducing apoptosis. This is Apoptotic protease-activating factor 1 from Homo sapiens (Human).